The following is a 1114-amino-acid chain: Putative surface protein SAV2496/SAV2497 (1114 aa).

An N-terminal signal peptide occupies residues 1-50 (MRDKKGPVNKRVDFLSNKLNKYSIRKFTVGTASILIGSLMYLGTQQEAEA). Disordered regions lie at residues 76–116 (TNKD…EDTP), 440–473 (KFNP…NPLT), and 496–1088 (EYGP…TGLE). Basic and acidic residues-rich tracts occupy residues 96–116 (DTIE…EDTP), 451–461 (KVTREGQKGEK), 505–523 (GHRD…EEVP), 554–570 (SIVE…RKFN), and 579–589 (KVTREGQKGEK). Positions 419-501 (SAKNNNRIRK…NELTEYGPET (83 aa)) constitute a G5 1 domain. Residues 547-628 (YGPVKGDSIV…NELTEYGPET (82 aa)) enclose the G5 2 domain. Residues 590–604 (TTTPTLKNPLTGEII) are compositionally biased toward low complexity. Composition is skewed to basic and acidic residues over residues 605–618 (SKGE…KDPI), 632–650 (GHRD…EEVP), 681–697 (SIVE…RKFN), 706–716 (KVTREGQKGEK), 733–746 (SKGE…KDPI), 760–778 (GHRD…EEVP), 809–825 (SIVE…RKFN), 834–844 (KVTREGQKGEK), 861–874 (SKGE…KDPV), 918–929 (KVIEEPVDDVIK), and 946–965 (FETK…RVKQ). A G5 3 domain is found at 674–756 (YGPVKGDSIV…NELTEYGPET (83 aa)). A G5 4 domain is found at 802–884 (YGPVKGDSIV…NELTEFGGEK (83 aa)). The region spanning 930–1012 (HGPKTGTPET…DKIVEFGGEK (83 aa)) is the G5 5 domain. Positions 968-982 (QPGSKTITTPITVNP) are enriched in polar residues. A compositionally biased stretch (basic and acidic residues) spans 996-1026 (EITKQPVDKIVEFGGEKPKDPKGPENPEKPS). The LPXTG sorting signal motif lies at 1082–1086 (LPKTG). Residue threonine 1085 is modified to Pentaglycyl murein peptidoglycan amidated threonine. A propeptide spans 1086 to 1114 (GLESTQKGLIFSSIIGIAGLMLLARRRKN) (removed by sortase).

The protein localises to the secreted. It is found in the cell wall. The polypeptide is Putative surface protein SAV2496/SAV2497 (Staphylococcus aureus (strain Mu50 / ATCC 700699)).